Here is a 94-residue protein sequence, read N- to C-terminus: Phosphoribosyl-ATP pyrophosphatase (94 aa).

Belongs to the PRA-PH family.

It localises to the cytoplasm. It catalyses the reaction 1-(5-phospho-beta-D-ribosyl)-ATP + H2O = 1-(5-phospho-beta-D-ribosyl)-5'-AMP + diphosphate + H(+). The protein operates within amino-acid biosynthesis; L-histidine biosynthesis; L-histidine from 5-phospho-alpha-D-ribose 1-diphosphate: step 2/9. The chain is Phosphoribosyl-ATP pyrophosphatase from Pyrobaculum calidifontis (strain DSM 21063 / JCM 11548 / VA1).